The sequence spans 336 residues: Pyridoxal 5'-phosphate synthase subunit PdxS (336 aa).

A D-ribose 5-phosphate-binding site is contributed by aspartate 64. Lysine 121 (schiff-base intermediate with D-ribose 5-phosphate) is an active-site residue. Position 193 (glycine 193) interacts with D-ribose 5-phosphate. Lysine 205 is a D-glyceraldehyde 3-phosphate binding site. D-ribose 5-phosphate contacts are provided by residues glycine 254 and 275–276 (GS).

This sequence belongs to the PdxS/SNZ family. In terms of assembly, in the presence of PdxT, forms a dodecamer of heterodimers.

The catalysed reaction is aldehydo-D-ribose 5-phosphate + D-glyceraldehyde 3-phosphate + L-glutamine = pyridoxal 5'-phosphate + L-glutamate + phosphate + 3 H2O + H(+). Its pathway is cofactor biosynthesis; pyridoxal 5'-phosphate biosynthesis. In terms of biological role, catalyzes the formation of pyridoxal 5'-phosphate from ribose 5-phosphate (RBP), glyceraldehyde 3-phosphate (G3P) and ammonia. The ammonia is provided by the PdxT subunit. Can also use ribulose 5-phosphate and dihydroxyacetone phosphate as substrates, resulting from enzyme-catalyzed isomerization of RBP and G3P, respectively. This chain is Pyridoxal 5'-phosphate synthase subunit PdxS, found in Pyrobaculum aerophilum (strain ATCC 51768 / DSM 7523 / JCM 9630 / CIP 104966 / NBRC 100827 / IM2).